Here is a 155-residue protein sequence, read N- to C-terminus: Snaclec bothrojaracin subunit alpha (155 aa).

The first 23 residues, 1 to 23, serve as a signal peptide directing secretion; sequence MGRFLFVSFGLLVVFLSLSGTAA. 3 disulfides stabilise this stretch: cysteine 25-cysteine 36, cysteine 53-cysteine 150, and cysteine 125-cysteine 142. The region spanning 32-151 is the C-type lectin domain; it reads HEGHCYKFFQ…CGQQNPFVCK (120 aa).

This sequence belongs to the snaclec family. In terms of assembly, heterodimer of subunits alpha and beta; disulfide-linked. Expressed by the venom gland.

The protein localises to the secreted. In terms of biological role, this potent antithrombotic agent acts in a calcium-independent manner. Exerts its anticoagulant effect by two distinct mechanisms. It binds to activated thrombin through exosite 1, blocking fibrinogen clotting, platelet activation, factor V activation and other effects, and it interacts with prothrombin (F2), decreasing its proteolytic activation -especially in the presence of factor Va. In vivo, intravenous injection before thrombosis induction causes a significant decrease in thrombus weight. Furthermore, BJC shows a prolonged effect by remaining in the plasma bound to prothrombin for at least 12 hours. The chain is Snaclec bothrojaracin subunit alpha from Bothrops jararaca (Jararaca).